Reading from the N-terminus, the 258-residue chain is Small ribosomal subunit protein mS23 (258 aa).

This sequence belongs to the mitochondrion-specific ribosomal protein mS23 family. In terms of assembly, component of the mitochondrial small ribosomal subunit.

It localises to the mitochondrion. The polypeptide is Small ribosomal subunit protein mS23 (Aspergillus fumigatus (strain CBS 144.89 / FGSC A1163 / CEA10) (Neosartorya fumigata)).